Consider the following 621-residue polypeptide: Chaperone protein HscA homolog (621 aa).

The protein belongs to the heat shock protein 70 family.

Chaperone involved in the maturation of iron-sulfur cluster-containing proteins. Has a low intrinsic ATPase activity which is markedly stimulated by HscB. This chain is Chaperone protein HscA homolog, found in Acidithiobacillus ferrooxidans (strain ATCC 23270 / DSM 14882 / CIP 104768 / NCIMB 8455) (Ferrobacillus ferrooxidans (strain ATCC 23270)).